Here is a 325-residue protein sequence, read N- to C-terminus: MASSSGSKAEFIVGGKYKLVRKIGSGSFGDIYLAINITNGEEVAVKLESQKARHPQLLYESKLYKILQGGVGIPHIRWYGQGKDYNVLVMDLLGPSLEDLFNFCSRRFTMKTVLMLADQMISRIEYVHTKNFIHRDIKPDNFLMGIGRHCNKLFLIDFGLAKKYRDNRTRQHIPYREDKNLTGTARYASINAHLGIEQSRRDDMESLGYVLMYFNRTSLPWQGLKAATKKQKYEKISEKKMSTPVEVLCKGFPAEFAMYLNYCRGLRFEEAPDYMYLRQLFRILFRTLNHQYDYTFDWTMLKQKAAQQAASSSGQGQQAQTPTGF.

The residue at position 2 (alanine 2) is an N-acetylalanine. The residue at position 4 (serine 4) is a Phosphoserine. At lysine 8 the chain carries N6-acetyllysine. The Protein kinase domain occupies 17 to 285; that stretch reads YKLVRKIGSG…YLRQLFRILF (269 aa). ATP-binding positions include 23–31 and lysine 46; that span reads IGSGSFGDI. Aspartate 136 functions as the Proton acceptor in the catalytic mechanism. Position 156 is a phosphoserine (isoleucine 156).

The protein belongs to the protein kinase superfamily. CK1 Ser/Thr protein kinase family. Casein kinase I subfamily. Interacts with the Axin complex. Interacts with TUT1, leading to TUT1 phosphorylation. Interacts with FAM83A, FAM83B, FAM83C, FAM83D, FAM83E, FAM83F, FAM83G and FAM83H (via DUF1669). Interaction with FAM83H recruits CSNK1A1 to keratin filaments. Phosphorylated by MTOR in response to mitogenic stimulation, leading to its activation.

It localises to the cytoplasm. It is found in the cytoskeleton. Its subcellular location is the microtubule organizing center. The protein resides in the centrosome. The protein localises to the chromosome. It localises to the centromere. It is found in the kinetochore. Its subcellular location is the nucleus speckle. The protein resides in the cilium basal body. The protein localises to the spindle. The catalysed reaction is L-seryl-[protein] + ATP = O-phospho-L-seryl-[protein] + ADP + H(+). It carries out the reaction L-threonyl-[protein] + ATP = O-phospho-L-threonyl-[protein] + ADP + H(+). Its function is as follows. Casein kinases are operationally defined by their preferential utilization of acidic proteins such as caseins as substrates. Can phosphorylate a large number of proteins. Participates in Wnt signaling. Phosphorylates CTNNB1 at 'Ser-45'. May phosphorylate PER1 and PER2. May play a role in segregating chromosomes during mitosis. May play a role in keratin cytoskeleton disassembly and thereby, it may regulate epithelial cell migration. Acts as a positive regulator of mTORC1 and mTORC2 signaling in response to nutrients by mediating phosphorylation of DEPTOR inhibitor. Acts as an inhibitor of NLRP3 inflammasome assembly by mediating phosphorylation of NLRP3. This Rattus norvegicus (Rat) protein is Casein kinase I isoform alpha (Csnk1a1).